We begin with the raw amino-acid sequence, 86 residues long: Large ribosomal subunit protein bL31B (86 aa).

It belongs to the bacterial ribosomal protein bL31 family. Type B subfamily. Part of the 50S ribosomal subunit.

The chain is Large ribosomal subunit protein bL31B from Burkholderia lata (strain ATCC 17760 / DSM 23089 / LMG 22485 / NCIMB 9086 / R18194 / 383).